The chain runs to 205 residues: TATA-box-binding protein (205 aa).

Repeat copies occupy residues 27–103 and 117–194.

Belongs to the TBP family. Belongs to the TFIID complex together with the TBP-associated factors (TAFs). Binds DNA as monomer.

The protein resides in the nucleus. In terms of biological role, general transcription factor that functions at the core of the DNA-binding multiprotein factor TFIID. Binding of TFIID to the TATA box is the initial transcriptional step of the pre-initiation complex (PIC), playing a role in the activation of eukaryotic genes transcribed by RNA polymerase II. In Dictyostelium discoideum (Social amoeba), this protein is TATA-box-binding protein (tbpA).